A 225-amino-acid polypeptide reads, in one-letter code: MVHVSNRSIQGMNILFSSWAVVLMVMGITLDKWVELISEDERAKMNHSPWMMCCPALWPEDDLKVVRIMMTSSLGLSFLLNLILGMKFTYLIPQNKYIQLFTTILSFFSGISLLWALILYHNKLKQGQSMHFSSYRITWIMYTAYLNVFFLSVCGVLSLLECKLSTSSCTCLNIHKSDNECKESENSIEDISLPECTAMPRSIVRAHTVNSLNKKVQTRHVTWAL.

Residues 1–8 (MVHVSNRS) lie on the Cytoplasmic side of the membrane. Residues 9 to 29 (IQGMNILFSSWAVVLMVMGIT) form a helical membrane-spanning segment. Residues 30-72 (LDKWVELISEDERAKMNHSPWMMCCPALWPEDDLKVVRIMMTS) lie on the Extracellular side of the membrane. A helical transmembrane segment spans residues 73–93 (SLGLSFLLNLILGMKFTYLIP). The Cytoplasmic portion of the chain corresponds to 94-99 (QNKYIQ). A helical transmembrane segment spans residues 100–120 (LFTTILSFFSGISLLWALILY). Over 121-136 (HNKLKQGQSMHFSSYR) the chain is Extracellular. Residues 137–157 (ITWIMYTAYLNVFFLSVCGVL) traverse the membrane as a helical segment. At 158 to 225 (SLLECKLSTS…VQTRHVTWAL (68 aa)) the chain is on the cytoplasmic side. The short motif at 219-223 (RHVTW) is the RVxF element.

In terms of assembly, interacts (via RVxF motif) with PPP1CC.

The protein localises to the cytoplasmic vesicle. The protein resides in the secretory vesicle. It is found in the acrosome membrane. Its function is as follows. Probably inhibits protein phosphatase 1 (PP1) in sperm via binding to catalytic subunit PPP1CC. This chain is Transmembrane protein 225 (TMEM225), found in Homo sapiens (Human).